Consider the following 630-residue polypeptide: NUAK family SNF1-like kinase 2 (630 aa).

The residue at position 1 (methionine 1) is an N-acetylmethionine. The 251-residue stretch at 57 to 307 folds into the Protein kinase domain; it reads YEFLETLGKG…LEDVASHWWV (251 aa). ATP is bound by residues 63–71 and lysine 85; that span reads LGKGTYGKV. Aspartate 179 acts as the Proton acceptor in catalysis. The residue at position 212 (threonine 212) is a Phosphothreonine. Disordered stretches follow at residues 361 to 504 and 521 to 566; these read HVPG…RLHR and GTAP…LDLP. Positions 464-476 are enriched in low complexity; that stretch reads SGYYSSPEPSESG. Serine 529, serine 550, serine 553, and serine 579 each carry phosphoserine.

Belongs to the protein kinase superfamily. CAMK Ser/Thr protein kinase family. SNF1 subfamily. The cofactor is Mg(2+). Phosphorylated at Thr-212 by STK11/LKB1 in complex with STE20-related adapter-alpha (STRADA) pseudo kinase and CAB39. Autophosphorylation is also possible at Thr-212. In terms of tissue distribution, expressed in liver, skin, testis, uterus, ovary, adrenal gland and brain (at protein level). Expressed in kidney, heart, skin, spleen, lung, uterus, liver and the exocrine and endocrine compartments of the human pancreas. A kinase-inactive isoform also appears to be expressed in the skin, spleen, lung, uterus, liver and testis.

It carries out the reaction L-seryl-[protein] + ATP = O-phospho-L-seryl-[protein] + ADP + H(+). The catalysed reaction is L-threonyl-[protein] + ATP = O-phospho-L-threonyl-[protein] + ADP + H(+). With respect to regulation, activated by phosphorylation on Thr-212 by STK11 in complex with STE20-related adapter-alpha (STRAD alpha) pseudo kinase and CAB39. In terms of biological role, stress-activated kinase involved in tolerance to glucose starvation. Induces cell-cell detachment by increasing F-actin conversion to G-actin. Expression is induced by CD95 or TNF-alpha, via NF-kappa-B. Protects cells from CD95-mediated apoptosis and is required for the increased motility and invasiveness of CD95-activated tumor cells. Phosphorylates LATS1 and LATS2. Plays a key role in neural tube closure during embryonic development through LATS2 phosphorylation and regulation of the nuclear localization of YAP1 a critical downstream regulatory target in the Hippo signaling pathway. This chain is NUAK family SNF1-like kinase 2, found in Rattus norvegicus (Rat).